Reading from the N-terminus, the 165-residue chain is Nucleotide-binding protein Pro_0479 (165 aa).

Belongs to the YajQ family.

In terms of biological role, nucleotide-binding protein. This is Nucleotide-binding protein Pro_0479 from Prochlorococcus marinus (strain SARG / CCMP1375 / SS120).